Consider the following 463-residue polypeptide: MIPQLNRNYAWAIALGLVARSSLVSAGPCDIYASGGTPCVAAHGTTRALHDSYTGPLYQVKRGSDGATTDIAPRHAGGVANATHQDTFCAGTTCLITIIYDQSGHGNHLSQAPPGHFIGPDSQGYDNLASAIGAPVTLNGQKAYGVFISPGTGYRNNAAKNTATGDEAEGLYAVLDGTHYNNGCCFDYGNAEVSGDDTGNGHMEAIYFGDLTAYGTGSGSGPWIMADLENGLFSGFNAKNNAEDPSLSYRFISAAVKGGPNKWAIRGGNAASGPLSTFYNGSRPNARGYNPMSKEGAIILGIGGHNSKLTVGSSISLRATTLCCTTRYVAHNGSTVNTQVVSSSSSAALKQQASWRVRTGLANSECFSFESVDTPNSFLMHNNFVLLLKSNDGTKALHEAATFCPQLGLNGKGNSIRSWSYPTRYFRHYDNVLYAASNGGVHKFDNPASFNDDVSWVVSASFA.

Positions 1–26 (MIPQLNRNYAWAIALGLVARSSLVSA) are cleaved as a signal peptide. A catalytic region spans residues 27 to 308 (GPCDIYASGG…ILGIGGHNSK (282 aa)). A disulfide bond links Cys-29 and Cys-39. A glycan (N-linked (GlcNAc...) asparagine) is linked at Asn-81. 2 disulfides stabilise this stretch: Cys-89–Cys-94 and Cys-184–Cys-185. Asp-227 contributes to the substrate binding site. Glu-229 functions as the Nucleophile in the catalytic mechanism. Residue Asn-230 participates in substrate binding. Residue Asn-280 is glycosylated (N-linked (GlcNAc...) asparagine). A substrate-binding site is contributed by Gly-304. The interval 309-463 (LTVGSSISLR…VSWVVSASFA (155 aa)) is ABD. A glycan (N-linked (GlcNAc...) asparagine) is linked at Asn-332. A disulfide bridge connects residues Cys-366 and Cys-404. Residues His-381, Asn-383, Phe-384, His-428, Asp-430, Leu-433, and Asp-453 each contribute to the substrate site.

It belongs to the glycosyl hydrolase 54 family. Post-translationally, residue Asn-280 is mannosylated with up to 7 mannose residues.

It localises to the secreted. It catalyses the reaction Hydrolysis of terminal non-reducing alpha-L-arabinofuranoside residues in alpha-L-arabinosides.. It participates in glycan metabolism; L-arabinan degradation. Secreted alpha-L-arabinofuranosidase that actively hydrolyzes p-NP-alpha-L-arabinofuranoside and is specific for furanose configuration of the carbohydrate ring. Also exhibits significant activity against polymeric arabinose-containing substrates such as arabinan and arabinoxylan, a major component of plant hemicellulose. This is Alpha-L-arabinofuranosidase B (abfB) from Penicillium canescens.